Consider the following 213-residue polypeptide: Uridine kinase (213 aa).

14–21 (GASASGKS) contributes to the ATP binding site.

The protein belongs to the uridine kinase family.

It is found in the cytoplasm. The enzyme catalyses uridine + ATP = UMP + ADP + H(+). It catalyses the reaction cytidine + ATP = CMP + ADP + H(+). The protein operates within pyrimidine metabolism; CTP biosynthesis via salvage pathway; CTP from cytidine: step 1/3. It participates in pyrimidine metabolism; UMP biosynthesis via salvage pathway; UMP from uridine: step 1/1. The polypeptide is Uridine kinase (Vibrio atlanticus (strain LGP32) (Vibrio splendidus (strain Mel32))).